The following is a 388-amino-acid chain: Ribonuclease D (388 aa).

Residues 7–173 (ITDSKTLAQF…QIFPKMLEEL (167 aa)) form the 3'-5' exonuclease domain. The region spanning 212–293 (KADVLGRLKA…ASHAPLAKEE (82 aa)) is the HRDC domain.

It belongs to the RNase D family. The cofactor is a divalent metal cation.

It is found in the cytoplasm. It catalyses the reaction Exonucleolytic cleavage that removes extra residues from the 3'-terminus of tRNA to produce 5'-mononucleotides.. Exonuclease involved in the 3' processing of various precursor tRNAs. Initiates hydrolysis at the 3'-terminus of an RNA molecule and releases 5'-mononucleotides. The chain is Ribonuclease D from Sphingobium indicum (strain DSM 16413 / CCM 7287 / MTCC 6362 / UT26 / NBRC 101211 / UT26S) (Sphingobium japonicum).